We begin with the raw amino-acid sequence, 32 residues long: Corticostatin-related peptide RK-1 (32 aa).

3 cysteine pairs are disulfide-bonded: cysteine 3–cysteine 29, cysteine 5–cysteine 19, and cysteine 9–cysteine 28.

It is found in the secreted. In terms of biological role, has antimicrobial activity against E.coli and activates ion channel activity. The chain is Corticostatin-related peptide RK-1 from Oryctolagus cuniculus (Rabbit).